Here is a 330-residue protein sequence, read N- to C-terminus: Putative protein DDB_G0285185 (330 aa).

Residues Asn-212–Ser-240 are disordered. Polar residues predominate over residues Leu-214–Ser-240.

This is Putative protein DDB_G0285185 from Dictyostelium discoideum (Social amoeba).